We begin with the raw amino-acid sequence, 623 residues long: Probable methyltransferase PMT8 (623 aa).

The Cytoplasmic portion of the chain corresponds to 1-13 (MMRGRSDGGLKKR). The chain crosses the membrane as a helical; Signal-anchor for type II membrane protein span at residues 14 to 34 (LIASVCVVALFVCFLFMYYGS). Residues 35–623 (SSQGASALEY…LTSESLRDSE (589 aa)) are Lumenal-facing. Residues Asn-204, Asn-350, and Asn-588 are each glycosylated (N-linked (GlcNAc...) asparagine).

The protein belongs to the methyltransferase superfamily.

Its subcellular location is the golgi apparatus membrane. The chain is Probable methyltransferase PMT8 from Arabidopsis thaliana (Mouse-ear cress).